The sequence spans 307 residues: Myeloid-associated differentiation marker-like protein 2 (307 aa).

MARVEL domains follow at residues alanine 17–glycine 154 and tyrosine 159–phenylalanine 303. The next 7 membrane-spanning stretches (helical) occupy residues phenylalanine 53–phenylalanine 73, alanine 90–phenylalanine 110, leucine 129–threonine 149, valine 163–valine 183, valine 198–glycine 218, valine 232–phenylalanine 252, and leucine 278–serine 298.

This sequence belongs to the MAL family.

It localises to the membrane. The sequence is that of Myeloid-associated differentiation marker-like protein 2 (MYADML2) from Bos taurus (Bovine).